A 160-amino-acid polypeptide reads, in one-letter code: Ribosome maturation factor RimP (160 aa).

The protein belongs to the RimP family.

Its subcellular location is the cytoplasm. Functionally, required for maturation of 30S ribosomal subunits. The chain is Ribosome maturation factor RimP from Geobacter sp. (strain M21).